Here is a 364-residue protein sequence, read N- to C-terminus: Aminomethyltransferase (364 aa).

The protein belongs to the GcvT family. As to quaternary structure, the glycine cleavage system is composed of four proteins: P, T, L and H.

The catalysed reaction is N(6)-[(R)-S(8)-aminomethyldihydrolipoyl]-L-lysyl-[protein] + (6S)-5,6,7,8-tetrahydrofolate = N(6)-[(R)-dihydrolipoyl]-L-lysyl-[protein] + (6R)-5,10-methylene-5,6,7,8-tetrahydrofolate + NH4(+). Functionally, the glycine cleavage system catalyzes the degradation of glycine. This Thermotoga sp. (strain RQ2) protein is Aminomethyltransferase.